We begin with the raw amino-acid sequence, 162 residues long: uncharacterized protein (162 aa).

Helical transmembrane passes span 15 to 40 (TIYS…YFLL), 47 to 66 (ISML…TTAL), 76 to 98 (YSIL…FLVY), 105 to 124 (KWLG…DPLL), and 128 to 150 (GYAV…WLVI).

It is found in the cell membrane. This is an uncharacterized protein from Archaeoglobus fulgidus (strain ATCC 49558 / DSM 4304 / JCM 9628 / NBRC 100126 / VC-16).